We begin with the raw amino-acid sequence, 753 residues long: Dolichyl-phosphate-mannose--protein mannosyltransferase 3 (753 aa).

Residues 1 to 50 (MPYRVATGYSEKSTDDDLIWRTPIVKEELEDADNFLKDDAELYDKVKNES) lie on the Cytoplasmic side of the membrane. A helical transmembrane segment spans residues 51–71 (AVSHLDTIVMPIIFTVLGMFT). Over 72-148 (RMYKIGRNNH…IDYVKMRLFQ (77 aa)) the chain is Lumenal. An N-linked (GlcNAc...) asparagine glycan is attached at Asn124. A helical membrane pass occupies residues 149–169 (AMFSSLCVPLAYFTGRAIGFS). At 170 to 174 (RLSVW) the chain is on the cytoplasmic side. Residues 175-195 (LFTILVIFENSYATLGKFILL) form a helical membrane-spanning segment. Over 196–235 (DSMLLFFTVSSYFCLAKFHTMRKSPFSARWWLWLCLTGLN) the chain is Lumenal. The helical transmembrane segment at 236–256 (LGCAISVKMVGLFIISVVGIY) threads the bilayer. Topologically, residues 257–282 (TISELWNLLSDRSVSWKVYVNHWLAR) are cytoplasmic. The helical transmembrane segment at 283–303 (IFGLIIIPVCVFLLCFKIHFD) threads the bilayer. Residues 304–602 (LLSNSGPGDS…IKYFLLGSPA (299 aa)) lie on the Lumenal side of the membrane. N-linked (GlcNAc...) asparagine glycosylation is present at Asn324. Residues 332 to 387 (PRDVALGSSIISIKNQALGGALLHSHVQPFPEGSEQQQVTVYGYSDANNEWFFQRI) form the MIR 1 domain. Asn398 carries an N-linked (GlcNAc...) asparagine glycan. 2 MIR domains span residues 401–457 (IEFV…IEIV) and 465–523 (PTLL…IETH). Residues 603–623 (SVWPSSIAVCALIIHVIFLTL) form a helical membrane-spanning segment. Topologically, residues 624-639 (KWQRQCVILSDPVERD) are cytoplasmic. A helical membrane pass occupies residues 640 to 660 (VFVMAAFYPLLAWLLHYMPFV). Topologically, residues 661–665 (VMSRV) are lumenal. A helical membrane pass occupies residues 666–686 (VYAHHYLPTLYFALMILSYYF). The Cytoplasmic portion of the chain corresponds to 687–703 (DMITKRWATRNTGKFLR). A helical transmembrane segment spans residues 704-724 (LGAYIVYGSIVIAGFFYFSPF). Topologically, residues 725–753 (SFGMDGPVDDYAYLAWLPTWQIVEDIRNT) are lumenal.

Belongs to the glycosyltransferase 39 family. As to quaternary structure, PMT3 and PMT5 form a functional heterodimer. Also forms a minor complex with PMT1.

It localises to the endoplasmic reticulum membrane. The enzyme catalyses a di-trans,poly-cis-dolichyl beta-D-mannosyl phosphate + L-seryl-[protein] = 3-O-(alpha-D-mannosyl)-L-seryl-[protein] + a di-trans,poly-cis-dolichyl phosphate + H(+). The catalysed reaction is a di-trans,poly-cis-dolichyl beta-D-mannosyl phosphate + L-threonyl-[protein] = 3-O-(alpha-D-mannosyl)-L-threonyl-[protein] + a di-trans,poly-cis-dolichyl phosphate + H(+). It functions in the pathway protein modification; protein glycosylation. Functionally, protein O-mannosyltransferase involved in O-glycosylation which is essential for cell wall rigidity. Forms a heterodimeric complex with PMT5 and more rarely with PMT1 to transfer mannose from Dol-P-mannose to Ser or Thr residues on proteins. Seems to have redundant activity to PMT2. This Saccharomyces cerevisiae (strain ATCC 204508 / S288c) (Baker's yeast) protein is Dolichyl-phosphate-mannose--protein mannosyltransferase 3.